The sequence spans 186 residues: NADH dehydrogenase [ubiquinone] 1 beta subcomplex subunit 8, mitochondrial (186 aa).

The N-terminal 28 residues, 1-28, are a transit peptide targeting the mitochondrion; that stretch reads MAAARAGVLGVRWLQKAARNVVPLGART. The chain crosses the membrane as a helical span at residues 133–153; sequence LFGFVAFMLFMFWVGETYPAY.

The protein belongs to the complex I NDUFB8 subunit family. As to quaternary structure, complex I is composed of 45 different subunits.

The protein resides in the mitochondrion inner membrane. Accessory subunit of the mitochondrial membrane respiratory chain NADH dehydrogenase (Complex I), that is believed not to be involved in catalysis. Complex I functions in the transfer of electrons from NADH to the respiratory chain. The immediate electron acceptor for the enzyme is believed to be ubiquinone. This is NADH dehydrogenase [ubiquinone] 1 beta subcomplex subunit 8, mitochondrial (NDUFB8) from Bos taurus (Bovine).